The chain runs to 452 residues: Phosphoglucosamine mutase (452 aa).

Ser-108 acts as the Phosphoserine intermediate in catalysis. Mg(2+) is bound by residues Ser-108, Asp-247, Asp-249, and Asp-251. Ser-108 carries the post-translational modification Phosphoserine.

It belongs to the phosphohexose mutase family. It depends on Mg(2+) as a cofactor. Post-translationally, activated by phosphorylation.

The catalysed reaction is alpha-D-glucosamine 1-phosphate = D-glucosamine 6-phosphate. Catalyzes the conversion of glucosamine-6-phosphate to glucosamine-1-phosphate. In Paraburkholderia xenovorans (strain LB400), this protein is Phosphoglucosamine mutase.